Reading from the N-terminus, the 429-residue chain is Adenylosuccinate synthetase (429 aa).

GTP contacts are provided by residues 12–18 (GDEGKGK) and 40–42 (GHT). The Proton acceptor role is filled by Asp13. Residues Asp13 and Gly40 each coordinate Mg(2+). Residues 13-16 (DEGK), 38-41 (NAGH), Thr129, Arg143, Gln223, Thr238, and Arg302 each bind IMP. The active-site Proton donor is the His41. Position 298–304 (298–304 (TVTGRRR)) interacts with substrate. Residues Arg304, 330–332 (KLD), and 412–414 (STS) each bind GTP.

It belongs to the adenylosuccinate synthetase family. In terms of assembly, homodimer. Mg(2+) is required as a cofactor.

It is found in the cytoplasm. It catalyses the reaction IMP + L-aspartate + GTP = N(6)-(1,2-dicarboxyethyl)-AMP + GDP + phosphate + 2 H(+). It functions in the pathway purine metabolism; AMP biosynthesis via de novo pathway; AMP from IMP: step 1/2. Plays an important role in the de novo pathway of purine nucleotide biosynthesis. Catalyzes the first committed step in the biosynthesis of AMP from IMP. The chain is Adenylosuccinate synthetase from Granulibacter bethesdensis (strain ATCC BAA-1260 / CGDNIH1).